A 337-amino-acid chain; its full sequence is Tetraacyldisaccharide 4'-kinase (337 aa).

Position 55–62 (55–62 (TAGGNGKT)) interacts with ATP.

The protein belongs to the LpxK family.

It catalyses the reaction a lipid A disaccharide + ATP = a lipid IVA + ADP + H(+). The protein operates within glycolipid biosynthesis; lipid IV(A) biosynthesis; lipid IV(A) from (3R)-3-hydroxytetradecanoyl-[acyl-carrier-protein] and UDP-N-acetyl-alpha-D-glucosamine: step 6/6. Transfers the gamma-phosphate of ATP to the 4'-position of a tetraacyldisaccharide 1-phosphate intermediate (termed DS-1-P) to form tetraacyldisaccharide 1,4'-bis-phosphate (lipid IVA). This chain is Tetraacyldisaccharide 4'-kinase, found in Sodalis glossinidius (strain morsitans).